The sequence spans 745 residues: Catalase-peroxidase (745 aa).

Residues 97–223 constitute a cross-link (tryptophyl-tyrosyl-methioninium (Trp-Tyr) (with M-249)); it reads WHSAGTYRTG…LAAVQMGLIY (127 aa). The active-site Proton acceptor is His-98. A cross-link (tryptophyl-tyrosyl-methioninium (Tyr-Met) (with W-97)) is located at residues 223 to 249; the sequence is YVNPEGPDGSPDPWASARDIRMTFARM. His-264 lines the heme b pocket. The disordered stretch occupies residues 345 to 368; that stretch reads KQWQPVNPKPEDLAPGAHSPDRRV.

It belongs to the peroxidase family. Peroxidase/catalase subfamily. Homodimer or homotetramer. Heme b is required as a cofactor. Formation of the three residue Trp-Tyr-Met cross-link is important for the catalase, but not the peroxidase activity of the enzyme.

It catalyses the reaction H2O2 + AH2 = A + 2 H2O. The catalysed reaction is 2 H2O2 = O2 + 2 H2O. Bifunctional enzyme with both catalase and broad-spectrum peroxidase activity. The polypeptide is Catalase-peroxidase (Phenylobacterium zucineum (strain HLK1)).